The primary structure comprises 978 residues: Mast/stem cell growth factor receptor Kit (978 aa).

Residues 1–25 (MRGARGAWDFLFVLLLLLLVQTGSS) form the signal peptide. Residues 26-525 (QPSVSPGELS…QIHAHTLFTP (500 aa)) are Extracellular-facing. 5 Ig-like C2-type domains span residues 27–112 (PSVS…VFVR), 121–205 (DLPL…LKVR), 212–309 (PVVS…LEVV), 318–411 (PMMN…VNVN), and 414–508 (PEIL…FNFA). An intrachain disulfide couples C58 to C97. 3 N-linked (GlcNAc...) asparagine glycosylation sites follow: N94, N130, and N145. Cystine bridges form between C136/C186, C151/C183, and C233/C291. N-linked (GlcNAc...) asparagine glycans are attached at residues N284, N294, N301, N321, N353, N368, N401, N464, and N487. An intrachain disulfide couples C429 to C492. The helical transmembrane segment at 526 to 546 (LLIGFVIAAGLMCIFVMILTY) threads the bilayer. Topologically, residues 547 to 978 (KYLQKPMYEV…TQPLLVHEDV (432 aa)) are cytoplasmic. A phosphotyrosine mark is found at Y548 and Y554. Y569 contacts Mg(2+). A phosphotyrosine; by autocatalysis mark is found at Y569 and Y571. Residues 569 to 571 (YVY) form an important for interaction with phosphotyrosine-binding proteins region. The region spanning 590–939 (LSFGKTLGAG…ISESTNHIYS (350 aa)) is the Protein kinase domain. ATP is bound by residues 597–604 (GAGAFGKV), K624, and 672–678 (EYCCYGD). A phosphotyrosine; by autocatalysis mark is found at Y704 and Y722. A Phosphotyrosine modification is found at Y731. Phosphoserine; by PKC/PRKCA occurs at positions 743 and 748. D794 acts as the Proton acceptor in catalysis. R798 is a binding site for ATP. Mg(2+) is bound by residues N799 and D812. A Phosphoserine modification is found at S823. The residue at position 825 (Y825) is a Phosphotyrosine; by autocatalysis. Residue S893 is modified to Phosphoserine. The residue at position 902 (Y902) is a Phosphotyrosine. Y938 is modified (phosphotyrosine; by autocatalysis). S961 carries the phosphoserine modification.

The protein belongs to the protein kinase superfamily. Tyr protein kinase family. CSF-1/PDGF receptor subfamily. As to quaternary structure, monomer in the absence of bound KITLG/SCF. Homodimer in the presence of bound KITLG/SCF, forming a heterotetramer with two KITLG/SCF molecules. Interacts (via phosphorylated tyrosine residues) with the adapter proteins GRB2 and GRB7 (via SH2 domain), and SH2B2/APS. Interacts (via C-terminus) with MPDZ (via the tenth PDZ domain). Interacts (via phosphorylated tyrosine residues) with PIK3R1 and PIK3CD. Interacts (via phosphorylated tyrosine) with CRK (isoform Crk-II), FYN, SHC1 and MATK/CHK (via SH2 domain). Interacts with LYN and FES/FPS. Interacts (via phosphorylated tyrosine residues) with the protein phosphatases PTPN6/SHP-1 (via SH2 domain), PTPN11/SHP-2 (via SH2 domain) and PTPRU. Interacts with PLCG1. Interacts with DOK1 and TEC. Interacts with IL1RAP (independent of stimulation with KITLG/SCF). A mast cell-specific KITLG/SCF-induced interleukin-33 signaling complex contains IL1RL1, IL1RAP, KIT and MYD88. Post-translationally, ubiquitinated by SOCS6. KIT is rapidly ubiquitinated after autophosphorylation induced by KITLG/SCF binding, leading to internalization and degradation. Autophosphorylated on tyrosine residues. KITLG/SCF binding promotes autophosphorylation. Phosphorylated tyrosine residues are important for interaction with specific binding partners.

The protein localises to the cell membrane. The catalysed reaction is L-tyrosyl-[protein] + ATP = O-phospho-L-tyrosyl-[protein] + ADP + H(+). Its activity is regulated as follows. Present in an inactive conformation in the absence of bound ligand. KITLG/SCF binding leads to dimerization and activation by autophosphorylation on tyrosine residues. Activity is down-regulated by PRKCA-mediated phosphorylation on serine residues. Its function is as follows. Tyrosine-protein kinase that acts as a cell-surface receptor for the cytokine KITLG/SCF and plays an essential role in the regulation of cell survival and proliferation, hematopoiesis, stem cell maintenance, gametogenesis, mast cell development, migration and function, and in melanogenesis. In response to KITLG/SCF binding, KIT can activate several signaling pathways. Phosphorylates PIK3R1, PLCG1, SH2B2/APS and CBL. Activates the AKT1 signaling pathway by phosphorylation of PIK3R1, the regulatory subunit of phosphatidylinositol 3-kinase. Activated KIT also transmits signals via GRB2 and activation of RAS, RAF1 and the MAP kinases MAPK1/ERK2 and/or MAPK3/ERK1. Promotes activation of STAT family members STAT1, STAT3, STAT5A and STAT5B. Activation of PLCG1 leads to the production of the cellular signaling molecules diacylglycerol and inositol 1,4,5-trisphosphate. KIT signaling is modulated by protein phosphatases, and by rapid internalization and degradation of the receptor. Activated KIT promotes phosphorylation of the protein phosphatases PTPN6/SHP-1 and PTPRU, and of the transcription factors STAT1, STAT3, STAT5A and STAT5B. Promotes phosphorylation of PIK3R1, CBL, CRK (isoform Crk-II), LYN, MAPK1/ERK2 and/or MAPK3/ERK1, PLCG1, SRC and SHC1. The polypeptide is Mast/stem cell growth factor receptor Kit (KIT) (Capra hircus (Goat)).